Here is a 490-residue protein sequence, read N- to C-terminus: Phosphoethanolamine N-methyltransferase 3 (490 aa).

The S-adenosyl-L-homocysteine site is built by glycine 60, arginine 65, aspartate 81, aspartate 106, valine 107, and asparagine 125. The phosphocholine site is built by serine 158, serine 163, glycine 164, arginine 168, and tyrosine 175. N-methylethanolamine phosphate-binding positions include 244 to 245 and tyrosine 253; that span reads QY. Phosphocholine is bound at residue tyrosine 253. S-adenosyl-L-homocysteine contacts are provided by valine 262, serine 263, glycine 289, aspartate 311, aspartate 337, cysteine 338, and arginine 354. Phosphocholine-binding residues include tyrosine 385, tyrosine 399, arginine 403, tyrosine 405, and lysine 471. N-methylethanolamine phosphate contacts are provided by residues tyrosine 385, tyrosine 399, 403–405, and lysine 471; that span reads RGY.

Belongs to the class I-like SAM-binding methyltransferase superfamily. PEAMT family. Expressed in root vasculature, shoots, rosettes leaves, cauline leaves, sepals, petals, anther filaments and ovules. Highly expressed in leaf vasculature.

The protein resides in the cytoplasm. It carries out the reaction phosphoethanolamine + S-adenosyl-L-methionine = N-methylethanolamine phosphate + S-adenosyl-L-homocysteine + H(+). The catalysed reaction is N-methylethanolamine phosphate + S-adenosyl-L-methionine = N,N-dimethylethanolamine phosphate + S-adenosyl-L-homocysteine + H(+). The enzyme catalyses N,N-dimethylethanolamine phosphate + S-adenosyl-L-methionine = phosphocholine + S-adenosyl-L-homocysteine + H(+). The protein operates within phospholipid metabolism; phosphatidylcholine biosynthesis; phosphocholine from phosphoethanolamine: step 1/1. Involved in phosphocholine biosynthesis. Catalyzes the N-methylation of phosphoethanolamine, phosphomonomethylethanolamine and phosphodimethylethanolamine, the three methylation steps required to convert phosphoethanolamine to phosphocholine (PC). In association with NMT1, regulates PC homeostasis, phase transition at the shoot apex, coordinated organ development, and fertility. In associtation with NMT1, involved in phosphatidylcholine biosynthesis and vascular development. This Arabidopsis thaliana (Mouse-ear cress) protein is Phosphoethanolamine N-methyltransferase 3.